A 1533-amino-acid polypeptide reads, in one-letter code: Protein TALPID3 (1533 aa).

The interval 32 to 57 (LSANKRLPVGTGTSLNGTSRGSSDLT) is disordered. A compositionally biased stretch (polar residues) spans 42–57 (TGTSLNGTSRGSSDLT). Positions 182-223 (QSDLEAKVNSVTELLSKLQETDKHLQRVTEQQTSIQRKQEKL) form a coiled coil. Basic and acidic residues predominate over residues 309-321 (KEVEDTSFDKQKS). Disordered stretches follow at residues 309-339 (KEVE…VSRD) and 377-400 (LTRK…TPEK). Residue S406 is modified to Phosphoserine. Residues 467-501 (SVLKDAEKILRGVQNNKKVLEENLEAIIRAKDGAA) are a coiled coil. The required for centrosomal localization stretch occupies residues 467–554 (SVLKDAEKIL…YEQKRFDQKN (88 aa)). The segment at 546 to 575 (EQKRFDQKNQRTKKGQNMTKDIRTNTQDKT) is disordered. Over residues 560–575 (GQNMTKDIRTNTQDKT) the composition is skewed to polar residues. 2 positions are modified to phosphothreonine: T1042 and T1046. The residue at position 1050 (S1050) is a Phosphoserine. A Phosphothreonine modification is found at T1063. S1066 carries the post-translational modification Phosphoserine. Positions 1129-1156 (SSPELPKPWGDGDLPLEEENPNSPQEEL) are disordered.

The protein belongs to the TALPID3 family. As to quaternary structure, interacts with CCP110, CEP290, CEP97, KIF24. As to expression, ubiquitously expressed. Expressed in photoreceptor cells (at protein level).

It localises to the cytoplasm. Its subcellular location is the cytoskeleton. The protein localises to the microtubule organizing center. The protein resides in the centrosome. It is found in the photoreceptor inner segment. It localises to the centriole. Its subcellular location is the cilium basal body. Its function is as follows. Required for ciliogenesis and sonic hedgehog/SHH signaling. Required for the centrosomal recruitment of RAB8A and for the targeting of centriole satellite proteins to centrosomes such as of PCM1. May play a role in early ciliogenesis in the disappearance of centriolar satellites that preceeds ciliary vesicle formation. Involved in regulation of cell intracellular organization. Involved in regulation of cell polarity. Required for asymmetrical localization of CEP120 to daughter centrioles. The polypeptide is Protein TALPID3 (KIAA0586) (Homo sapiens (Human)).